We begin with the raw amino-acid sequence, 132 residues long: Global transcriptional regulator Spx (132 aa).

The cysteines at positions 10 and 13 are disulfide-linked.

The protein belongs to the ArsC family. Spx subfamily. Interacts with the C-terminal domain of the alpha subunit of the RNAP.

It localises to the cytoplasm. Its function is as follows. Global transcriptional regulator that plays a key role in stress response and exerts either positive or negative regulation of genes. Acts by interacting with the C-terminal domain of the alpha subunit of the RNA polymerase (RNAP). This interaction can enhance binding of RNAP to the promoter region of target genes and stimulate their transcription, or block interaction of RNAP with activator. The chain is Global transcriptional regulator Spx from Lactiplantibacillus plantarum (strain ATCC BAA-793 / NCIMB 8826 / WCFS1) (Lactobacillus plantarum).